The primary structure comprises 79 residues: Putative defensin-like protein 309 (79 aa).

The first 19 residues, 1–19 (MKILAFFIFVLLIFSCSSS), serve as a signal peptide directing secretion. Disulfide bonds link Cys-31–Cys-50, Cys-37–Cys-55, and Cys-41–Cys-57.

The protein belongs to the DEFL family.

It is found in the secreted. The protein is Putative defensin-like protein 309 of Arabidopsis thaliana (Mouse-ear cress).